Reading from the N-terminus, the 624-residue chain is MAIRQLPEILINQIAAGEVVERPASVVKELVENALDAGATRVDIDLEEGGVRLIRIRDNGGGIAPEELPLAVSRHATSKIASLDDLETVATLGFRGEALPSIASVSRFTLASRRPDAEHGSALQIEGGRLGEVMPRAHAPGTTVEVRELFFNVPARRKFLRAERTELGHIEEWLRSLALARPDVELRVSHNGKPSRRYKPGDLYSDARLGETLGEDFARQALRVDHSGAGLRLHGWVAQPHYSRASTDQQYLYVNGRSVRDRSVAHAVKMAYGDVLFHGRQPAYVLFLELDPARVDVNVHPAKHEVRFREARLIHDFVYRTLQDALAQTRAGALPADVGVGGAAALGIGAVAAQGGGSYVADAGAGHPGAGSGSGYASWAPSQAPLGLRVDEARAAYAALYAPAAGSALRDDGQPVLSGTGLPATAHDSGVPPLGYAVAQLHGIYILAENAEGLIVVDMHAAHERIGYERLKQAHDSIGLHAQPLLVPMTLAVGEREADTAEREADTLASLGFEITRSGPQSLHVRSIPALLANADPEALLRDVLGDLREHGQSRRIATARDELLSTMACHGAVRANRRLTVPEMNALLRDMEATERSGQCNHGRPTWARFTLGEIDRWFLRGR.

This sequence belongs to the DNA mismatch repair MutL/HexB family.

This protein is involved in the repair of mismatches in DNA. It is required for dam-dependent methyl-directed DNA mismatch repair. May act as a 'molecular matchmaker', a protein that promotes the formation of a stable complex between two or more DNA-binding proteins in an ATP-dependent manner without itself being part of a final effector complex. The protein is DNA mismatch repair protein MutL of Xanthomonas campestris pv. campestris (strain B100).